Consider the following 386-residue polypeptide: Cytochrome b (386 aa).

4 helical membrane-spanning segments follow: residues 32-52 (FGSLLALCLGIQIVTGVTLAM), 76-98 (WMIRYLHANTASFFFLFVYLHIG), 113-133 (PWSIGVIILILMMATAFLGYV), and 179-199 (FFSLHYLLPFILAALAVMHLL). Heme b contacts are provided by His-82 and His-96. The heme b site is built by His-183 and His-197. A ubiquinone is bound at residue His-202. Helical transmembrane passes span 225 to 245 (YTFKDLVTIFLFFLVLALFLF), 289 to 309 (LGGVIAMFGSLLILLAMPLLD), 321 to 341 (LMKFFFWLLVVDFLILLWCGS), and 348 to 368 (FITLGQFATTFYFSWFLIIVP).

Belongs to the cytochrome b family. As to quaternary structure, fungal cytochrome b-c1 complex contains 10 subunits; 3 respiratory subunits, 2 core proteins and 5 low-molecular weight proteins. Cytochrome b-c1 complex is a homodimer. Requires heme b as cofactor.

It localises to the mitochondrion inner membrane. Functionally, component of the ubiquinol-cytochrome c reductase complex (complex III or cytochrome b-c1 complex) that is part of the mitochondrial respiratory chain. The b-c1 complex mediates electron transfer from ubiquinol to cytochrome c. Contributes to the generation of a proton gradient across the mitochondrial membrane that is then used for ATP synthesis. In Rhizopus oryzae (Mucormycosis agent), this protein is Cytochrome b (cob).